The following is a 208-amino-acid chain: Putative dioxygenase RT0384 (208 aa).

It belongs to the intradiol ring-cleavage dioxygenase family.

This chain is Putative dioxygenase RT0384, found in Rickettsia typhi (strain ATCC VR-144 / Wilmington).